A 463-amino-acid chain; its full sequence is Probable Xaa-Pro aminopeptidase PEPP (463 aa).

Mn(2+) is bound by residues Asp-259, Asp-270, Glu-393, and Glu-433.

It belongs to the peptidase M24B family. It depends on Mn(2+) as a cofactor.

It carries out the reaction Release of any N-terminal amino acid, including proline, that is linked to proline, even from a dipeptide or tripeptide.. Catalyzes the removal of a penultimate prolyl residue from the N-termini of peptides. In Phaeosphaeria nodorum (strain SN15 / ATCC MYA-4574 / FGSC 10173) (Glume blotch fungus), this protein is Probable Xaa-Pro aminopeptidase PEPP (PEPP).